A 282-amino-acid chain; its full sequence is 4-diphosphocytidyl-2-C-methyl-D-erythritol kinase (282 aa).

Lysine 12 is an active-site residue. Residue 95-105 (PMGGGIGGGSS) participates in ATP binding. Aspartate 137 is an active-site residue.

This sequence belongs to the GHMP kinase family. IspE subfamily.

It catalyses the reaction 4-CDP-2-C-methyl-D-erythritol + ATP = 4-CDP-2-C-methyl-D-erythritol 2-phosphate + ADP + H(+). Its pathway is isoprenoid biosynthesis; isopentenyl diphosphate biosynthesis via DXP pathway; isopentenyl diphosphate from 1-deoxy-D-xylulose 5-phosphate: step 3/6. Functionally, catalyzes the phosphorylation of the position 2 hydroxy group of 4-diphosphocytidyl-2C-methyl-D-erythritol. The protein is 4-diphosphocytidyl-2-C-methyl-D-erythritol kinase of Pseudomonas aeruginosa (strain ATCC 15692 / DSM 22644 / CIP 104116 / JCM 14847 / LMG 12228 / 1C / PRS 101 / PAO1).